Here is a 492-residue protein sequence, read N- to C-terminus: Probable folate-biopterin transporter 5 (492 aa).

The next 12 helical transmembrane spans lie at 46-66 (VFAV…LGHV), 92-112 (ISWI…PIFG), 117-137 (PYFI…SLQS), 142-162 (YLAL…DVTI), 186-206 (LSYS…VHLV), 210-230 (GVFG…VLFS), 264-285 (LYMF…YWFT), 298-318 (VGFI…LYNL), 328-348 (LFLW…ILVL), 361-381 (FIVV…MVIF), 396-416 (FFAL…WLGG), and 433-453 (WLAV…LFLV).

This sequence belongs to the major facilitator superfamily. Folate-biopterin transporter (TC 2.A.71) family.

It localises to the membrane. Functionally, could mediate folate transport. In Arabidopsis thaliana (Mouse-ear cress), this protein is Probable folate-biopterin transporter 5.